A 237-amino-acid chain; its full sequence is MTPEVFYKALEDFDIHLNDFQKEQFDIYFQTLVEWNDKINLTAITEKNDVYLKHFYDSIAPILHGYIKNEPIKLLDIGAGAGFPSIPMKIIYPQLDITIIDSLNKRITFLKQLSEVLHLEGVHFFHGRAEDFGQDINFRAQFDIVTARAVARMQILSELTIPFLKLNGKLLALKAQAVDQELTDAQNALKLLFSQVIENNHYQLPNGDSRYITIVEKKKETPRKYPRKAGTPNKKPL.

S-adenosyl-L-methionine is bound by residues glycine 78, phenylalanine 83, 129–130, and arginine 148; that span reads AE. A disordered region spans residues 218–237; sequence KKETPRKYPRKAGTPNKKPL.

Belongs to the methyltransferase superfamily. RNA methyltransferase RsmG family.

The protein resides in the cytoplasm. Its function is as follows. Specifically methylates the N7 position of a guanine in 16S rRNA. In Streptococcus uberis (strain ATCC BAA-854 / 0140J), this protein is Ribosomal RNA small subunit methyltransferase G.